We begin with the raw amino-acid sequence, 759 residues long: Zinc finger protein 287 (759 aa).

In terms of domain architecture, SCAN box spans 42-124; that stretch reads RRNFRNFPYP…ALVEDLTQIL (83 aa). Residues 127–154 are disordered; that stretch reads EEAPQSSALPQDTPEDDPNHDPNPASQA. The 69-residue stretch at 166–234 folds into the KRAB domain; that stretch reads VTFNDVAVDI…IKEIVEGPNP (69 aa). C2H2-type zinc fingers lie at residues 366-388, 394-416, 422-444, 450-472, 478-500, 506-528, 534-556, 562-584, 590-612, 618-640, 646-668, 674-696, 702-724, and 730-752; these read YSCN…RENH, YECE…QRMH, YECH…QRIH, YKCE…QRTH, YKCL…QRVH, YICN…QKIH, YKCN…QRIH, YKCT…QTTH, YICN…HRTH, YKCS…QRIH, FKCN…QRVH, YKCH…RRTH, and YGCR…QRVH.

It belongs to the krueppel C2H2-type zinc-finger protein family. As to expression, expressed in brain and at low levels in kidney and spleen and few hematopoietic cell lines.

It is found in the nucleus. May be involved in transcriptional regulation. In Mus musculus (Mouse), this protein is Zinc finger protein 287.